The primary structure comprises 399 residues: Telomeric repeat-binding factor 2-interacting protein 1 (399 aa).

Position 2 is an N-acetylalanine (Ala-2). Phosphoserine occurs at positions 36 and 43. One can recognise a BRCT domain in the interval 78-101 (FISTQYILDCVERNERLELEAYRL). The tract at residues 104 to 132 (ASAADTGSEAKPGALAEGAAEPEPQRHAG) is disordered. Residues 112–125 (EAKPGALAEGAAEP) are compositionally biased toward low complexity. A Glycyl lysine isopeptide (Lys-Gly) (interchain with G-Cter in SUMO2) cross-link involves residue Lys-114. One can recognise a Myb-like domain in the interval 128-188 (QRHAGRIAFT…SLKDRYLKHL (61 aa)). Phosphoserine occurs at positions 154 and 156. A Glycyl lysine isopeptide (Lys-Gly) (interchain with G-Cter in SUMO2) cross-link involves residue Lys-194. Disordered stretches follow at residues 196 to 244 (LLGD…EEIQ) and 264 to 311 (VVVD…QPEV). A phosphoserine mark is found at Ser-203 and Ser-206. Residues Lys-208, Lys-212, and Lys-240 each participate in a glycyl lysine isopeptide (Lys-Gly) (interchain with G-Cter in SUMO2) cross-link. The segment covering 280–304 (CDDDPPTPEEDSETQPDEEEEEEEE) has biased composition (acidic residues). Lys-372 participates in a covalent cross-link: Glycyl lysine isopeptide (Lys-Gly) (interchain with G-Cter in SUMO2). The Nuclear localization signal signature appears at 383–399 (KKFGAQNVARRIEFRKK).

This sequence belongs to the RAP1 family. As to quaternary structure, associates with the I-kappa-B-kinase (IKK) core complex, composed of CHUK, IKBKB and IKBKG. Homodimer. Component of the shelterin complex (telosome) composed of TERF1, TERF2, TINF2, TERF2IP ACD and POT1. Interacts with TERF2; the interaction is direct. Does not interact with TERF1. Interacts with SLX4/BTBD12. In terms of tissue distribution, ubiquitous. Highly expressed.

It is found in the nucleus. It localises to the cytoplasm. Its subcellular location is the chromosome. The protein localises to the telomere. Acts both as a regulator of telomere function and as a transcription regulator. Involved in the regulation of telomere length and protection as a component of the shelterin complex (telosome). In contrast to other components of the shelterin complex, it is dispensible for telomere capping and does not participate in the protection of telomeres against non-homologous end-joining (NHEJ)-mediated repair. Instead, it is required to negatively regulate telomere recombination and is essential for repressing homology-directed repair (HDR), which can affect telomere length. Does not bind DNA directly: recruited to telomeric double-stranded 5'-TTAGGG-3' repeats via its interaction with TERF2. Independently of its function in telomeres, also acts as a transcription regulator: recruited to extratelomeric 5'-TTAGGG-3' sites via its association with TERF2 or other factors, and regulates gene expression. When cytoplasmic, associates with the I-kappa-B-kinase (IKK) complex and acts as a regulator of the NF-kappa-B signaling by promoting IKK-mediated phosphorylation of RELA/p65, leading to activate expression of NF-kappa-B target genes. This is Telomeric repeat-binding factor 2-interacting protein 1 (TERF2IP) from Homo sapiens (Human).